Here is a 241-residue protein sequence, read N- to C-terminus: Phosphoribosylaminoimidazole-succinocarboxamide synthase (241 aa).

It belongs to the SAICAR synthetase family.

It carries out the reaction 5-amino-1-(5-phospho-D-ribosyl)imidazole-4-carboxylate + L-aspartate + ATP = (2S)-2-[5-amino-1-(5-phospho-beta-D-ribosyl)imidazole-4-carboxamido]succinate + ADP + phosphate + 2 H(+). Its pathway is purine metabolism; IMP biosynthesis via de novo pathway; 5-amino-1-(5-phospho-D-ribosyl)imidazole-4-carboxamide from 5-amino-1-(5-phospho-D-ribosyl)imidazole-4-carboxylate: step 1/2. This Oenococcus oeni (strain ATCC BAA-331 / PSU-1) protein is Phosphoribosylaminoimidazole-succinocarboxamide synthase.